The primary structure comprises 189 residues: Elongation factor P (189 aa).

Residue Lys-34 is modified to N6-(3,6-diaminohexanoyl)-5-hydroxylysine.

The protein belongs to the elongation factor P family. Post-translationally, may be beta-lysylated on the epsilon-amino group of Lys-34 by the combined action of EpmA and EpmB, and then hydroxylated on the C5 position of the same residue by EpmC (if this protein is present). Lysylation is critical for the stimulatory effect of EF-P on peptide-bond formation. The lysylation moiety may extend toward the peptidyltransferase center and stabilize the terminal 3-CCA end of the tRNA. Hydroxylation of the C5 position on Lys-34 may allow additional potential stabilizing hydrogen-bond interactions with the P-tRNA.

It localises to the cytoplasm. The protein operates within protein biosynthesis; polypeptide chain elongation. In terms of biological role, involved in peptide bond synthesis. Alleviates ribosome stalling that occurs when 3 or more consecutive Pro residues or the sequence PPG is present in a protein, possibly by augmenting the peptidyl transferase activity of the ribosome. Modification of Lys-34 is required for alleviation. The sequence is that of Elongation factor P from Acinetobacter baumannii (strain AB307-0294).